Consider the following 34-residue polypeptide: Phospholipase A2 (34 aa).

H18 is an active-site residue. D19 is a binding site for Ca(2+).

It belongs to the phospholipase A2 family. Group I subfamily. D49 sub-subfamily. Ca(2+) is required as a cofactor. Contains 7 disulfide bonds. As to expression, expressed by the venom gland.

It localises to the secreted. It carries out the reaction a 1,2-diacyl-sn-glycero-3-phosphocholine + H2O = a 1-acyl-sn-glycero-3-phosphocholine + a fatty acid + H(+). Functionally, snake venom phospholipase A2 (PLA2) that strongly inhibits platelet aggregation and has a strong anticoagulant activity. PLA2 catalyzes the calcium-dependent hydrolysis of the 2-acyl groups in 3-sn-phosphoglycerides. The polypeptide is Phospholipase A2 (Pseudechis papuanus (Papuan black snake)).